The primary structure comprises 24 residues: Lectin (24 aa).

The protein belongs to the leguminous lectin family. In terms of assembly, homotetramer.

Its function is as follows. Agglutinates erythrocytes of blood group A. Binds in decreasing order of affinity: N-acetyl-D-galactosamine, D-galactose, and D-galactosamine. The chain is Lectin from Crotalaria pallida (Smooth rattlebox).